Consider the following 176-residue polypeptide: Ribosome maturation factor RimM (176 aa).

The region spanning 100 to 173 (KDEYHYHDLI…WLLINPPPGL (74 aa)) is the PRC barrel domain.

It belongs to the RimM family. Binds ribosomal protein uS19.

It is found in the cytoplasm. In terms of biological role, an accessory protein needed during the final step in the assembly of 30S ribosomal subunit, possibly for assembly of the head region. Essential for efficient processing of 16S rRNA. May be needed both before and after RbfA during the maturation of 16S rRNA. It has affinity for free ribosomal 30S subunits but not for 70S ribosomes. This is Ribosome maturation factor RimM from Prochlorococcus marinus (strain NATL2A).